A 483-amino-acid polypeptide reads, in one-letter code: Isocitrate dehydrogenase [NADP] (483 aa).

Residue threonine 74 coordinates NADP(+). D-threo-isocitrate is bound by residues serine 83, asparagine 85, arginine 89, arginine 99, and arginine 121. A Mg(2+)-binding site is contributed by aspartate 232. NADP(+) contacts are provided by residues 264-270 and asparagine 277; that span reads HGSAPDI.

It belongs to the isocitrate and isopropylmalate dehydrogenases family. As to quaternary structure, homodimer. Requires Mg(2+) as cofactor. The cofactor is Mn(2+).

It catalyses the reaction D-threo-isocitrate + NADP(+) = 2-oxoglutarate + CO2 + NADPH. Functionally, catalyzes the oxidative decarboxylation of isocitrate to 2-oxoglutarate and carbon dioxide with the concomitant reduction of NADP(+). In Rickettsia conorii (strain ATCC VR-613 / Malish 7), this protein is Isocitrate dehydrogenase [NADP] (icd).